The chain runs to 278 residues: MRVIATIGEFRAARAAMHGAVGLVPTMGYLHEGHLSLVRRARAENDHVIVTIFVNPTQFGPSEDLSRYPRDLPRDLALLEAEKIDVVFAPNVAEMYPPGFGTFVDVGPIAAPLEGAARPGHFRGVATVVCKLFNITTPHRAYFGQKDAQQTLVIRRMTLDLNLPVEIIVCPIVREPDGLAMSSRNVYLNPKERRAATVLFRALQAVQERFRAGERNGDALRAAMRAVIDAEPLAHPDYVSIADLDDLHELDRVTSRALASLAVRIGTTRLIDNCILEA.

27 to 34 (MGYLHEGH) lines the ATP pocket. The active-site Proton donor is histidine 34. Glutamine 58 lines the (R)-pantoate pocket. Position 58 (glutamine 58) interacts with beta-alanine. An ATP-binding site is contributed by 144–147 (GQKD). Residue glutamine 150 coordinates (R)-pantoate. ATP-binding positions include valine 173 and 181 to 184 (MSSR).

This sequence belongs to the pantothenate synthetase family. Homodimer.

Its subcellular location is the cytoplasm. The enzyme catalyses (R)-pantoate + beta-alanine + ATP = (R)-pantothenate + AMP + diphosphate + H(+). The protein operates within cofactor biosynthesis; (R)-pantothenate biosynthesis; (R)-pantothenate from (R)-pantoate and beta-alanine: step 1/1. In terms of biological role, catalyzes the condensation of pantoate with beta-alanine in an ATP-dependent reaction via a pantoyl-adenylate intermediate. The polypeptide is Pantothenate synthetase (Roseiflexus castenholzii (strain DSM 13941 / HLO8)).